A 437-amino-acid polypeptide reads, in one-letter code: MTNYFDKIEKVKYEGADSTNPFAYKHYNANEVILGKTMAEHLRLAVCYWHTFCWNGNDMFGVGSLDRSWQKMSDPLAAAKQKADIAFEFLTKLGVPYYCFHDVDIAPEGNSYQEYVRNFNTIVDILEQKQAESGVKLLWGTANCFSNPRYMSGAATNPNPEIFTRAAAQVFNAMNATKRLGGENYVLWGGREGYETLLNTDLRREREQIGRFMQMVVEHKHKIGFSGTLLIEPKPQEPTKHQYDYDVATVYGFLKQFGLEKEIKVNIEANHATLAGHTFQHEIATAAALDILGSIDANRGDPQLGWDTDQFPNSVEENTLAIYEILKAGGLTTGGFNFDAKIRRQSINPYDLFHGHIGAIDVLALSLKRAAKMVEDHTLQNIVDQRYAGWNGELGQQILAGKSSLEALAQAAQNLDPNPVSGQQEYIENLVNGYIYR.

Catalysis depends on residues histidine 101 and aspartate 104. The Mg(2+) site is built by glutamate 232, glutamate 268, histidine 271, aspartate 296, aspartate 307, aspartate 309, and aspartate 339.

This sequence belongs to the xylose isomerase family. As to quaternary structure, homotetramer. Mg(2+) is required as a cofactor.

It localises to the cytoplasm. It carries out the reaction alpha-D-xylose = alpha-D-xylulofuranose. The protein is Xylose isomerase of Mannheimia succiniciproducens (strain KCTC 0769BP / MBEL55E).